The sequence spans 82 residues: Putative membrane protein insertion efficiency factor (82 aa).

Belongs to the UPF0161 family.

It is found in the cell inner membrane. In terms of biological role, could be involved in insertion of integral membrane proteins into the membrane. This is Putative membrane protein insertion efficiency factor from Rickettsia africae (strain ESF-5).